Consider the following 372-residue polypeptide: Anhydro-N-acetylmuramic acid kinase (372 aa).

21 to 28 serves as a coordination point for ATP; the sequence is GTSMDGVD.

It belongs to the anhydro-N-acetylmuramic acid kinase family.

It carries out the reaction 1,6-anhydro-N-acetyl-beta-muramate + ATP + H2O = N-acetyl-D-muramate 6-phosphate + ADP + H(+). Its pathway is amino-sugar metabolism; 1,6-anhydro-N-acetylmuramate degradation. It participates in cell wall biogenesis; peptidoglycan recycling. In terms of biological role, catalyzes the specific phosphorylation of 1,6-anhydro-N-acetylmuramic acid (anhMurNAc) with the simultaneous cleavage of the 1,6-anhydro ring, generating MurNAc-6-P. Is required for the utilization of anhMurNAc either imported from the medium or derived from its own cell wall murein, and thus plays a role in cell wall recycling. The polypeptide is Anhydro-N-acetylmuramic acid kinase (Bordetella avium (strain 197N)).